We begin with the raw amino-acid sequence, 521 residues long: Ribonuclease Y (521 aa).

Residues 1–21 (MFFIEHPFVYLGLDLIVGCLI) traverse the membrane as a helical segment. The KH domain occupies 211–271 (TVSMVPLPSD…VRREVARLAL (61 aa)). The HD domain occupies 337 to 430 (VLQHSLEVAF…VQAADALSGA (94 aa)).

This sequence belongs to the RNase Y family.

Its subcellular location is the cell membrane. In terms of biological role, endoribonuclease that initiates mRNA decay. The chain is Ribonuclease Y from Desulfotalea psychrophila (strain LSv54 / DSM 12343).